We begin with the raw amino-acid sequence, 656 residues long: Heat shock 70 kDa protein, mitochondrial (656 aa).

The transit peptide at 1 to 23 (MFARRLRGAGSLAAASLARWQSS) directs the protein to the mitochondrion. Positions 624-656 (EYQQAAAGNSSSSSGNTDSSQGEQQQQGDQQKQ) are disordered. Positions 626–656 (QQAAAGNSSSSSGNTDSSQGEQQQQGDQQKQ) are enriched in low complexity.

Belongs to the heat shock protein 70 family.

It is found in the mitochondrion matrix. The protein resides in the kinetoplast. In terms of biological role, may participate in eukaryotic mitochondrial DNA replication. The protein is Heat shock 70 kDa protein, mitochondrial (MTP70) of Trypanosoma cruzi.